A 460-amino-acid chain; its full sequence is MSNYAIILAAGKGTRMKSDLPKVLHKVSGITMLEHVFRAVSVIEPAKNVTVIGHKAELVREVLDGQSAFTMQTEQLGTGHAVMMAEEELAGLEGQTLVIAGDTPLITGESLKNLIDFHVNHKNVATILTATADNPFGYGRIIRNENGEVTKIVEQKDANKFEQQVKEINTGTYVFDNKRLFEALKNINTNNAQGEYYLTDVISIFRENGEKVGAYTLRDFEESLGVNDRVALATAEDVMRRRINKTHMINGVTFQNPNATYIDVDVEIAPDVVIEANVTLKGKTKVGAESVLTNGTYIVDSTIGANTVITNSMIEHSVVEKGATVGPFAHIRPDSMLKEGVHIGNFVEVKGSTIGENTKAGHLTYIGNAEVGSDVNFGAGTITVNYDGQHKFKTQIANNAFIGSNSTLIAPLEIGDNALTAAGSTITDNVPADSVAIGRSRQVNKEGYAIKKPHHPSQQK.

Residues Met1–Arg229 are pyrophosphorylase. UDP-N-acetyl-alpha-D-glucosamine-binding positions include Leu8–Gly11, Lys22, Gln72, and Gly77–Thr78. Asp102 contacts Mg(2+). UDP-N-acetyl-alpha-D-glucosamine is bound by residues Gly139, Glu154, Asn169, and Asn227. Asn227 contributes to the Mg(2+) binding site. Residues Val230–Asn250 form a linker region. Residues Gly251–Lys460 form an N-acetyltransferase region. 2 residues coordinate UDP-N-acetyl-alpha-D-glucosamine: Arg332 and Lys350. The active-site Proton acceptor is the His362. Tyr365 and Asn376 together coordinate UDP-N-acetyl-alpha-D-glucosamine. Acetyl-CoA contacts are provided by residues Ala379, Asn385 to Tyr386, Ser404, Ala422, and Arg439.

The protein in the N-terminal section; belongs to the N-acetylglucosamine-1-phosphate uridyltransferase family. This sequence in the C-terminal section; belongs to the transferase hexapeptide repeat family. In terms of assembly, homotrimer. Mg(2+) is required as a cofactor.

Its subcellular location is the cytoplasm. It catalyses the reaction alpha-D-glucosamine 1-phosphate + acetyl-CoA = N-acetyl-alpha-D-glucosamine 1-phosphate + CoA + H(+). It carries out the reaction N-acetyl-alpha-D-glucosamine 1-phosphate + UTP + H(+) = UDP-N-acetyl-alpha-D-glucosamine + diphosphate. The protein operates within nucleotide-sugar biosynthesis; UDP-N-acetyl-alpha-D-glucosamine biosynthesis; N-acetyl-alpha-D-glucosamine 1-phosphate from alpha-D-glucosamine 6-phosphate (route II): step 2/2. It functions in the pathway nucleotide-sugar biosynthesis; UDP-N-acetyl-alpha-D-glucosamine biosynthesis; UDP-N-acetyl-alpha-D-glucosamine from N-acetyl-alpha-D-glucosamine 1-phosphate: step 1/1. It participates in bacterial outer membrane biogenesis; LPS lipid A biosynthesis. Catalyzes the last two sequential reactions in the de novo biosynthetic pathway for UDP-N-acetylglucosamine (UDP-GlcNAc). The C-terminal domain catalyzes the transfer of acetyl group from acetyl coenzyme A to glucosamine-1-phosphate (GlcN-1-P) to produce N-acetylglucosamine-1-phosphate (GlcNAc-1-P), which is converted into UDP-GlcNAc by the transfer of uridine 5-monophosphate (from uridine 5-triphosphate), a reaction catalyzed by the N-terminal domain. This is Bifunctional protein GlmU from Streptococcus thermophilus (strain ATCC BAA-491 / LMD-9).